Consider the following 206-residue polypeptide: Large ribosomal subunit protein uL4 (206 aa).

A disordered region spans residues 44 to 87 (KRQGTQKAKTRSEVRGGGRKPWRQKGTGHARQGSTRSPQWTGGG). Basic residues predominate over residues 60–71 (GGRKPWRQKGTG).

The protein belongs to the universal ribosomal protein uL4 family. In terms of assembly, part of the 50S ribosomal subunit.

Functionally, one of the primary rRNA binding proteins, this protein initially binds near the 5'-end of the 23S rRNA. It is important during the early stages of 50S assembly. It makes multiple contacts with different domains of the 23S rRNA in the assembled 50S subunit and ribosome. Forms part of the polypeptide exit tunnel. The sequence is that of Large ribosomal subunit protein uL4 from Agathobacter rectalis (strain ATCC 33656 / DSM 3377 / JCM 17463 / KCTC 5835 / VPI 0990) (Eubacterium rectale).